The chain runs to 277 residues: Large ribosomal subunit protein uL2 (277 aa).

Residues 222 to 265 (GVAMNPIDHPHGGGEGRTSGGRHPVTPWGKPTKGKKTRTNKSTD) are disordered.

The protein belongs to the universal ribosomal protein uL2 family. In terms of assembly, part of the 50S ribosomal subunit. Forms a bridge to the 30S subunit in the 70S ribosome.

In terms of biological role, one of the primary rRNA binding proteins. Required for association of the 30S and 50S subunits to form the 70S ribosome, for tRNA binding and peptide bond formation. It has been suggested to have peptidyltransferase activity; this is somewhat controversial. Makes several contacts with the 16S rRNA in the 70S ribosome. In Bradyrhizobium sp. (strain BTAi1 / ATCC BAA-1182), this protein is Large ribosomal subunit protein uL2.